The primary structure comprises 133 residues: Ribosome-binding factor A (133 aa).

Belongs to the RbfA family. Monomer. Binds 30S ribosomal subunits, but not 50S ribosomal subunits or 70S ribosomes.

It is found in the cytoplasm. In terms of biological role, one of several proteins that assist in the late maturation steps of the functional core of the 30S ribosomal subunit. Associates with free 30S ribosomal subunits (but not with 30S subunits that are part of 70S ribosomes or polysomes). Required for efficient processing of 16S rRNA. May interact with the 5'-terminal helix region of 16S rRNA. In Yersinia enterocolitica, this protein is Ribosome-binding factor A.